The chain runs to 373 residues: MPPVPGVPFRNVDNDSPTSVELEDWVDAQHPTDEEEEEASSASSTLYLVFSPSSFSTSSSLILGGPEEEEVPSGVIPNLTESIPSSPPQGPPQGPSQSPLSSCCSSFSWSSFSEESSSQKGEDTGTCQGLPDSESSFTYTLDEKVAELVEFLLLKYEAEEPVTEAEMLMIVIKYKDYFPVILKRAREFMELLFGLALIEVGPDHFCVFANTVGLTDEGSDDEGMPENSLLIIILSVIFIKGNCASEEVIWEVLNAVGVYAGREHFVYGEPRELLTKVWVQGHYLEYREVPHSSPPYYEFLWGPRAHSESIKKKVLEFLAKLNNTVPSSFPSWYKDALKDVEERVQATIDTADDATVMASESLSVMSSNVSFSE.

The disordered stretch occupies residues 1 to 102 (MPPVPGVPFR…QGPSQSPLSS (102 aa)). Over residues 40-60 (SSASSTLYLVFSPSSFSTSSS) the composition is skewed to low complexity. Over residues 85–94 (SSPPQGPPQG) the composition is skewed to pro residues. Positions 135 to 373 (SSFTYTLDEK…VMSSNVSFSE (239 aa)) are interaction with TRIM28. One can recognise an MAGE domain in the interval 141–336 (LDEKVAELVE…SSFPSWYKDA (196 aa)).

As to quaternary structure, interacts with TRIM28 and UBE2H. As to expression, not expressed in normal tissues, except in germ cells in the seminiferous tubules and in Purkinje cells of the cerebellum. Expressed in various tumors, including melanoma, lymphoma, as well as pancreatic cancer, mammary gland cancer, non-small cell lung cancer and liver cancer. In hepatocellular carcinoma, there is an inverse correlation between tumor differentiation and protein expression, i.e. the lower the differentiation, the higher percentage of expression.

The protein resides in the cytoplasm. Its subcellular location is the nucleus. In terms of biological role, proposed to enhance ubiquitin ligase activity of RING-type zinc finger-containing E3 ubiquitin-protein ligases. In vitro enhances ubiquitin ligase activity of TRIM28 and stimulates p53/TP53 ubiquitination in presence of Ubl-conjugating enzyme UBE2H leading to p53/TP53 degradation. Proposed to act through recruitment and/or stabilization of the Ubl-conjugating enzymes (E2) at the E3:substrate complex. This is Melanoma-associated antigen C2 (MAGEC2) from Homo sapiens (Human).